A 263-amino-acid polypeptide reads, in one-letter code: 4-hydroxy-tetrahydrodipicolinate reductase (263 aa).

NAD(+) is bound by residues 7–12 (GFKGRM), 96–98 (GTT), and 122–125 (APNF). The Proton donor/acceptor role is filled by histidine 152. Histidine 153 serves as a coordination point for (S)-2,3,4,5-tetrahydrodipicolinate. Lysine 156 (proton donor) is an active-site residue. (S)-2,3,4,5-tetrahydrodipicolinate is bound at residue 162–163 (GT).

Belongs to the DapB family.

It is found in the cytoplasm. The catalysed reaction is (S)-2,3,4,5-tetrahydrodipicolinate + NAD(+) + H2O = (2S,4S)-4-hydroxy-2,3,4,5-tetrahydrodipicolinate + NADH + H(+). The enzyme catalyses (S)-2,3,4,5-tetrahydrodipicolinate + NADP(+) + H2O = (2S,4S)-4-hydroxy-2,3,4,5-tetrahydrodipicolinate + NADPH + H(+). Its pathway is amino-acid biosynthesis; L-lysine biosynthesis via DAP pathway; (S)-tetrahydrodipicolinate from L-aspartate: step 4/4. Its function is as follows. Catalyzes the conversion of 4-hydroxy-tetrahydrodipicolinate (HTPA) to tetrahydrodipicolinate. The sequence is that of 4-hydroxy-tetrahydrodipicolinate reductase from Listeria monocytogenes serotype 4b (strain CLIP80459).